The sequence spans 56 residues: Potassium channel toxin alpha-KTx 9.2 (56 aa).

A signal peptide spans Met-1 to Ala-28. 3 disulfides stabilise this stretch: Cys-31–Cys-47, Cys-34–Cys-52, and Cys-38–Cys-54.

Expressed by the venom gland.

It localises to the secreted. Functionally, blocks small conductance calcium-activated potassium channels (KCNN, SK). Low toxicity by intracerebroventricular injection into mice. The polypeptide is Potassium channel toxin alpha-KTx 9.2 (Olivierus martensii (Manchurian scorpion)).